Reading from the N-terminus, the 189-residue chain is Potassium-transporting ATPase KdpC subunit (189 aa).

A helical transmembrane segment spans residues 10 to 30 (VIFAMLTLICGVIYPYAITGI).

It belongs to the KdpC family. In terms of assembly, the system is composed of three essential subunits: KdpA, KdpB and KdpC.

It localises to the cell inner membrane. In terms of biological role, part of the high-affinity ATP-driven potassium transport (or Kdp) system, which catalyzes the hydrolysis of ATP coupled with the electrogenic transport of potassium into the cytoplasm. This subunit acts as a catalytic chaperone that increases the ATP-binding affinity of the ATP-hydrolyzing subunit KdpB by the formation of a transient KdpB/KdpC/ATP ternary complex. This chain is Potassium-transporting ATPase KdpC subunit, found in Janthinobacterium sp. (strain Marseille) (Minibacterium massiliensis).